The sequence spans 138 residues: Acidic phospholipase A2 AplTX-I (138 aa).

The N-terminal stretch at 1 to 16 is a signal peptide; it reads MRTLWIMAVLLLGVEG. 7 disulfide bridges follow: C42–C131, C44–C60, C59–C111, C65–C138, C66–C104, C73–C97, and C91–C102. Y43, G45, and G47 together coordinate Ca(2+). H63 is a catalytic residue. D64 is a Ca(2+) binding site. D105 is a catalytic residue.

Monomer. Ca(2+) serves as cofactor. As to expression, expressed by the venom gland.

The protein resides in the secreted. The catalysed reaction is a 1,2-diacyl-sn-glycero-3-phosphocholine + H2O = a 1-acyl-sn-glycero-3-phosphocholine + a fatty acid + H(+). Its activity is regulated as follows. Inhibited by divalent cations different from calcium ions (cadmium, magnesium, manganese, zinc), since they act as competitive antagonists of this cofactor. Snake venom phospholipase A2 (PLA2) that triggers a high neuromuscular toxicity in chick biventer cervicis preparations, but not in mouse phrenic nerve-diaphragm (PND) preparations, suggesting a selective neurotoxin activity towards birds. Does not induce myotoxic, coagulant, anticoagulant, edema, and antibacterial activities. PLA2 catalyzes the calcium-dependent hydrolysis of the 2-acyl groups in 3-sn-phosphoglycerides. This Agkistrodon piscivorus leucostoma (Western cottonmouth) protein is Acidic phospholipase A2 AplTX-I.